We begin with the raw amino-acid sequence, 526 residues long: Cyclin-L1 (526 aa).

A disordered region spans residues 1 to 36 (MASGPHSTATAAAAASSAAPSAGGSSSGTTTTTTTT). 2 cyclin-like regions span residues 88 to 190 (ELIQ…RVLK) and 203 to 287 (KIIV…ETLR). The tract at residues 318–526 (KGLNPDGTPA…SRSGHGRHRR (209 aa)) is disordered. Position 325 is a phosphothreonine (Thr-325). Ser-335 and Ser-338 each carry phosphoserine. Residues Lys-339 and Lys-347 each participate in a glycyl lysine isopeptide (Lys-Gly) (interchain with G-Cter in SUMO2) cross-link. Basic and acidic residues predominate over residues 342-352 (SPREVKAEEKS). Phosphoserine occurs at positions 352 and 355. A compositionally biased stretch (basic and acidic residues) spans 361–370 (VKKEPEDRQQ). Lys-362 is covalently cross-linked (Glycyl lysine isopeptide (Lys-Gly) (interchain with G-Cter in SUMO2)). Ser-374 carries the phosphoserine modification. 4 stretches are compositionally biased toward basic residues: residues 382-418 (DSKRSRNSRSASRSRSRTRSRSRSHTPRRHYNNRRSR), 438-452 (RRHHNHGSPHLKAKH), 460-476 (SNRHGHKRKKSRSRSQS), and 486-498 (KKHRHERGHHRDR). The tract at residues 390–432 (RSASRSRSRTRSRSRSHTPRRHYNNRRSRSGTYSSRSRSRSRS) is RS. Phosphoserine is present on Ser-445. Positions 499–508 (RERSRSFERS) are enriched in basic and acidic residues. Residues 509-526 (HKSKHHGGSRSGHGRHRR) show a composition bias toward basic residues.

It belongs to the cyclin family. Cyclin L subfamily. In terms of assembly, (Microbial infection) Interacts with human herpes virus 1 (HHV-1) transcriptional regulator ICP22. Interacts with POLR2A via its hyperphosphorylated C-terminal domain (CTD). Interacts with CDK11A, CDK12 and CDK13. Isoforms 1 and 2, but not isoform 3, interact with CDK11B. May form a ternary complex with CDK11B and casein kinase II (CKII). Interacts with pre-mRNA-splicing factors, including at least SRSF1, SRSF2 and SRSF7/SLU7. Widely expressed. Overexpression in primary tumors of head and neck squamous cell carcinomas (HNSCC).

The protein resides in the nucleus speckle. It localises to the nucleus. The protein localises to the nucleoplasm. In terms of biological role, involved in pre-mRNA splicing. Functions in association with cyclin-dependent kinases (CDKs). Inhibited by the CDK-specific inhibitor CDKN1A/p21. May play a role in the regulation of RNA polymerase II (pol II). May be a candidate proto-oncogene in head and neck squamous cell carcinomas (HNSCC). The chain is Cyclin-L1 (CCNL1) from Homo sapiens (Human).